Reading from the N-terminus, the 113-residue chain is uncharacterized protein (113 aa).

An N-terminal signal peptide occupies residues methionine 1–alanine 16. Residues glycine 81–asparagine 101 are compositionally biased toward gly residues. The tract at residues glycine 81 to glycine 103 is disordered.

As to expression, nacreous layer of shell (at protein level).

It localises to the secreted. This is an uncharacterized protein from Margaritifera margaritifera (Freshwater pearl mussel).